The primary structure comprises 88 residues: MPNIKSAIKRTKTNNERRAHNATIKSAMRTAIKQVEASVANNEADKAKTALSEAAKRIDKAVKTGLVHKNAAARYKSRLAKQVNGLSA.

A disordered region spans residues 1–20; it reads MPNIKSAIKRTKTNNERRAH.

It belongs to the bacterial ribosomal protein bS20 family.

Functionally, binds directly to 16S ribosomal RNA. The polypeptide is Small ribosomal subunit protein bS20 (Bacillus velezensis (strain DSM 23117 / BGSC 10A6 / LMG 26770 / FZB42) (Bacillus amyloliquefaciens subsp. plantarum)).